The sequence spans 619 residues: Translation initiation factor IF-2 (619 aa).

Residues 120–289 (PRPPIVTIMG…ILLLGEVEGY (170 aa)) enclose the tr-type G domain. The tract at residues 129–136 (GHVDHGKT) is G1. 129–136 (GHVDHGKT) is a binding site for GTP. Residues 154-158 (GITQK) form a G2 region. Positions 176–179 (DTPG) are G3. Residues 176–180 (DTPGH) and 230–233 (NKMD) contribute to the GTP site. The tract at residues 230 to 233 (NKMD) is G4. Residues 266 to 268 (SAL) form a G5 region.

This sequence belongs to the TRAFAC class translation factor GTPase superfamily. Classic translation factor GTPase family. IF-2 subfamily.

The protein localises to the cytoplasm. Functionally, one of the essential components for the initiation of protein synthesis. Protects formylmethionyl-tRNA from spontaneous hydrolysis and promotes its binding to the 30S ribosomal subunits. Also involved in the hydrolysis of GTP during the formation of the 70S ribosomal complex. This Mycoplasma genitalium (strain ATCC 33530 / DSM 19775 / NCTC 10195 / G37) (Mycoplasmoides genitalium) protein is Translation initiation factor IF-2 (infB).